The primary structure comprises 218 residues: Thiopurine S-methyltransferase (218 aa).

S-adenosyl-L-methionine is bound by residues tryptophan 10, leucine 45, glutamate 66, and arginine 123.

It belongs to the class I-like SAM-binding methyltransferase superfamily. TPMT family.

The protein localises to the cytoplasm. The enzyme catalyses S-adenosyl-L-methionine + a thiopurine = S-adenosyl-L-homocysteine + a thiopurine S-methylether.. This Azotobacter vinelandii (strain DJ / ATCC BAA-1303) protein is Thiopurine S-methyltransferase.